The chain runs to 336 residues: MSATSINPNNWHWTSKDCRVWSHEYFNKELPKIQASEGPTSARITQVNSCEGDVDVSMRKRKVITIFDLKIQMEFKGETKDGVEATGSITCPELSYDLGYSDYVFDIDIYSASKEKEPIKELVREKIIPQIRQLFSGFSQVLLQTHGDDVYLSTEEHNGNAARGLPVHSSFKQNNSSQTSSNKGTTTVAAGSGSDGSRVSAVVNTADISENYTFDAPANELYATFLDPARVAAWSRAPPQLDVRPQGAFSLFHGNVVGKFLVLEENKKIVQTWRLSSWPTGHYAEITFTFDQADSYTTLRMIMKGVPIGEEEVVQGNIQDYYIRPIKTVFGFGAVL.

Residues 162–195 form a disordered region; that stretch reads ARGLPVHSSFKQNNSSQTSSNKGTTTVAAGSGSD. Low complexity predominate over residues 169–187; the sequence is SSFKQNNSSQTSSNKGTTT.

Belongs to the AHA1 family.

This is an uncharacterized protein from Schizosaccharomyces pombe (strain 972 / ATCC 24843) (Fission yeast).